The primary structure comprises 347 residues: NADH-ubiquinone oxidoreductase chain 2 (347 aa).

11 helical membrane-spanning segments follow: residues 3–23, 25–45, 59–79, 96–116, 127–147, 149–169, 178–198, 201–221, 239–259, 274–294, and 326–346; these read PMTF…VLLS, HWFM…PVLM, YFLT…INTM, ILIT…FWVP, GLIL…QIYP, LNTN…GWGG, IMAY…TYNP, SLLN…LLII, IVTT…PLTG, NSLI…FFYM, and TAPL…LITL.

This sequence belongs to the complex I subunit 2 family. In terms of assembly, core subunit of respiratory chain NADH dehydrogenase (Complex I) which is composed of 45 different subunits. Interacts with TMEM242.

The protein resides in the mitochondrion inner membrane. The enzyme catalyses a ubiquinone + NADH + 5 H(+)(in) = a ubiquinol + NAD(+) + 4 H(+)(out). Core subunit of the mitochondrial membrane respiratory chain NADH dehydrogenase (Complex I) which catalyzes electron transfer from NADH through the respiratory chain, using ubiquinone as an electron acceptor. Essential for the catalytic activity and assembly of complex I. The polypeptide is NADH-ubiquinone oxidoreductase chain 2 (Sylvisorex ollula (Greater forest shrew)).